Consider the following 36-residue polypeptide: Photosystem I reaction center subunit VIII (36 aa).

The helical transmembrane segment at 4-24 (FSLPSILVPLVGLVLPAIAMA) threads the bilayer.

It belongs to the PsaI family.

It localises to the plastid. The protein localises to the chloroplast thylakoid membrane. Functionally, may help in the organization of the PsaL subunit. This is Photosystem I reaction center subunit VIII from Piper cenocladum (Ant piper).